The primary structure comprises 37 residues: MQWNAFSFVSYVYLRYFISFRPNIVLASVRLSWYSII.

This is an uncharacterized protein from Saccharomyces cerevisiae (strain ATCC 204508 / S288c) (Baker's yeast).